The chain runs to 126 residues: Profilin-2 (126 aa).

Serine 2 carries the blocked amino end (Ser) modification. Lysine 104 is modified (N6,N6,N6-trimethyllysine).

It belongs to the profilin family. As to quaternary structure, occurs in many kinds of cells as a complex with monomeric actin in a 1:1 ratio.

It localises to the cytoplasm. The protein resides in the cytoskeleton. Binds to actin and affects the structure of the cytoskeleton. At high concentrations, profilin prevents the polymerization of actin, whereas it enhances it at low concentrations. By binding to PIP2, it inhibits the formation of IP3 and DG. In Acanthamoeba castellanii (Amoeba), this protein is Profilin-2.